The primary structure comprises 104 residues: Large ribosomal subunit protein uL24 (104 aa).

It belongs to the universal ribosomal protein uL24 family. As to quaternary structure, part of the 50S ribosomal subunit.

Functionally, one of two assembly initiator proteins, it binds directly to the 5'-end of the 23S rRNA, where it nucleates assembly of the 50S subunit. One of the proteins that surrounds the polypeptide exit tunnel on the outside of the subunit. In Methylobacterium radiotolerans (strain ATCC 27329 / DSM 1819 / JCM 2831 / NBRC 15690 / NCIMB 10815 / 0-1), this protein is Large ribosomal subunit protein uL24.